The following is a 316-amino-acid chain: L-lactate dehydrogenase (316 aa).

Residues Val-15, Asp-37, Lys-42, Tyr-68, and 82–83 (GL) contribute to the NAD(+) site. Residues Gln-85, Arg-91, and 123 to 126 (NPVD) each bind substrate. Residues 121 to 123 (ASN) and Thr-146 contribute to the NAD(+) site. 151–154 (DTSR) serves as a coordination point for substrate. Beta-D-fructose 1,6-bisphosphate-binding residues include Arg-156 and His-171. His-178 acts as the Proton acceptor in catalysis. Position 222 is a phosphotyrosine (Tyr-222). Residue Thr-231 coordinates substrate.

The protein belongs to the LDH/MDH superfamily. LDH family. As to quaternary structure, homotetramer.

The protein resides in the cytoplasm. The enzyme catalyses (S)-lactate + NAD(+) = pyruvate + NADH + H(+). Its pathway is fermentation; pyruvate fermentation to lactate; (S)-lactate from pyruvate: step 1/1. Allosterically activated by fructose 1,6-bisphosphate (FBP). Its function is as follows. Catalyzes the conversion of lactate to pyruvate. The protein is L-lactate dehydrogenase of Borreliella burgdorferi (strain ATCC 35210 / DSM 4680 / CIP 102532 / B31) (Borrelia burgdorferi).